A 131-amino-acid polypeptide reads, in one-letter code: ER membrane protein complex subunit 5 (131 aa).

Residues 1–3 lie on the Cytoplasmic side of the membrane; sequence MAP. A helical membrane pass occupies residues 4 to 22; sequence SLWKGLVGIGLFALAHAAF. The Lumenal portion of the chain corresponds to 23 to 43; that stretch reads SAAQHRSYMRLTEKEDESLPI. Residues 44 to 63 form a helical membrane-spanning segment; sequence DIVLQTLLAFAVTCYGIVHI. The Cytoplasmic portion of the chain corresponds to 64 to 131; the sequence is AGEFKDMDAT…KLRKLESLRR (68 aa). Position 120 is a phosphoserine (S120).

It belongs to the membrane magnesium transporter (TC 1.A.67) family. As to quaternary structure, component of the ER membrane protein complex (EMC).

The protein resides in the endoplasmic reticulum membrane. It localises to the golgi apparatus membrane. Its subcellular location is the early endosome membrane. In terms of biological role, part of the endoplasmic reticulum membrane protein complex (EMC) that enables the energy-independent insertion into endoplasmic reticulum membranes of newly synthesized membrane proteins. Preferentially accommodates proteins with transmembrane domains that are weakly hydrophobic or contain destabilizing features such as charged and aromatic residues. Involved in the cotranslational insertion of multi-pass membrane proteins in which stop-transfer membrane-anchor sequences become ER membrane spanning helices. It is also required for the post-translational insertion of tail-anchored/TA proteins in endoplasmic reticulum membranes. By mediating the proper cotranslational insertion of N-terminal transmembrane domains in an N-exo topology, with translocated N-terminus in the lumen of the ER, controls the topology of multi-pass membrane proteins like the G protein-coupled receptors. By regulating the insertion of various proteins in membranes, it is indirectly involved in many cellular processes. May be involved in Mg(2+) transport. The polypeptide is ER membrane protein complex subunit 5 (Homo sapiens (Human)).